The following is a 320-amino-acid chain: Tabersonine synthase (320 aa).

The short motif at 78-80 (HGA) is the Involved in the stabilization of the negatively charged intermediate by the formation of the oxyanion hole element. Position 81 (Gly-81) interacts with (-)-tabersonine. Ser-170 (proton acceptor) is an active-site residue. The active site involves Asp-266. Tyr-297 serves as a coordination point for (-)-tabersonine. Tyr-297 (proton donor/acceptor) is an active-site residue.

This sequence belongs to the 'GDXG' lipolytic enzyme family. Interacts with dehydroprecondylocarpine acetate synthase (DPAS). Expressed in leaf epidermis.

It is found in the cytoplasm. Its subcellular location is the cytosol. The protein resides in the nucleus. It carries out the reaction dehydrosecodine = (-)-tabersonine. The catalysed reaction is dihydroprecondylocarpine acetate = (-)-tabersonine + acetate + H(+). The protein operates within alkaloid biosynthesis. Functionally, component of iboga and aspidosperma monoterpenoid indole alkaloids (MIAs, e.g. tabersonine and catharanthine) biosynthesis pathway from 19E-geissoschizine, psychoactive compounds likely to be used in the treatment of opioid dependence. Catalyzes the conversion of dehydrosecodine to tabersonine, a precursor of vindoline; this process starts with the conversion of dihydroprecondylocarpine acetate to dehydrosecodine. The chain is Tabersonine synthase from Catharanthus roseus (Madagascar periwinkle).